A 713-amino-acid polypeptide reads, in one-letter code: RNA-binding protein vts1 (713 aa).

Residues 154–188 (NSGLSLDKSLPSSPKGDSPSLSSSLPSLTTKSNLS) show a composition bias toward low complexity. Disordered stretches follow at residues 154–208 (NSGL…SSKH), 254–336 (EPPA…RDRG), 356–389 (DESS…SRPL), 554–596 (EKIE…GNEL), and 667–713 (KAAK…SSMD). 2 stretches are compositionally biased toward polar residues: residues 189-208 (GNLN…SSKH) and 258-281 (SSAS…NANV). Low complexity-rich tracts occupy residues 282–297 (TSSL…SKTT) and 304–320 (SKKS…PNTS). Polar residues predominate over residues 321 to 330 (FFETPHNNIW). Residues 369-378 (SPPPPPPPPE) show a composition bias toward pro residues. Over residues 559-569 (PPNNSKNQTYR) the composition is skewed to polar residues. Positions 570-583 (RSSRGSNKTRKSIS) are enriched in basic residues. Residues 595 to 656 (ELPQDIPSWL…LKSFQEVAPL (62 aa)) form the SAM domain. Residues 670–681 (KNQSSESLTSFK) show a composition bias toward polar residues. Serine 673 is modified (phosphoserine). The segment covering 691 to 702 (SGSMSNEISSNS) has biased composition (low complexity). A compositionally biased stretch (polar residues) spans 703-713 (TKQDVSSSSMD).

It belongs to the VTS1 family. Monomer. Binds to RNA.

The protein localises to the cytoplasm. Its subcellular location is the cytosol. It localises to the P-body. RNA-binding protein involved in post-transcriptional regulation through transcript degradation. The protein is RNA-binding protein vts1 of Schizosaccharomyces pombe (strain 972 / ATCC 24843) (Fission yeast).